A 213-amino-acid chain; its full sequence is Uridine kinase (213 aa).

An ATP-binding site is contributed by 15-22; the sequence is GASASGKS.

This sequence belongs to the uridine kinase family.

The protein resides in the cytoplasm. The catalysed reaction is uridine + ATP = UMP + ADP + H(+). It carries out the reaction cytidine + ATP = CMP + ADP + H(+). Its pathway is pyrimidine metabolism; CTP biosynthesis via salvage pathway; CTP from cytidine: step 1/3. The protein operates within pyrimidine metabolism; UMP biosynthesis via salvage pathway; UMP from uridine: step 1/1. In Pectobacterium carotovorum subsp. carotovorum (strain PC1), this protein is Uridine kinase.